Reading from the N-terminus, the 36-residue chain is Pancreatic polypeptide (36 aa).

Position 36 is a tyrosine amide (Tyr-36).

It belongs to the NPY family.

The protein resides in the secreted. Its function is as follows. Hormone secreted by pancreatic cells that acts as a regulator of pancreatic and gastrointestinal functions probably by signaling through the G protein-coupled receptor NPY4R2. This Tapirus pinchaque (Mountain tapir) protein is Pancreatic polypeptide (PPY).